The chain runs to 346 residues: Phosphate acyltransferase (346 aa).

The protein belongs to the PlsX family. Homodimer. Probably interacts with PlsY.

It is found in the cytoplasm. It catalyses the reaction a fatty acyl-[ACP] + phosphate = an acyl phosphate + holo-[ACP]. It functions in the pathway lipid metabolism; phospholipid metabolism. Catalyzes the reversible formation of acyl-phosphate (acyl-PO(4)) from acyl-[acyl-carrier-protein] (acyl-ACP). This enzyme utilizes acyl-ACP as fatty acyl donor, but not acyl-CoA. The sequence is that of Phosphate acyltransferase from Geotalea uraniireducens (strain Rf4) (Geobacter uraniireducens).